The following is a 465-amino-acid chain: Ribosomal protein uS12 methylthiotransferase RimO (465 aa).

The MTTase N-terminal domain maps to 1–117; sequence MKVGFISLGC…IVDICEGMPP (117 aa). [4Fe-4S] cluster-binding residues include C10, C46, C80, C150, C154, and C157. The Radical SAM core domain occupies 136–369; that stretch reads ATPRHFAYMK…AIQRKIARAR (234 aa). One can recognise a TRAM domain in the interval 371–442; the sequence is RGLVGKEVPV…DYDVVGTLLA (72 aa).

The protein belongs to the methylthiotransferase family. RimO subfamily. [4Fe-4S] cluster serves as cofactor.

It localises to the cytoplasm. It catalyses the reaction L-aspartate(89)-[ribosomal protein uS12]-hydrogen + (sulfur carrier)-SH + AH2 + 2 S-adenosyl-L-methionine = 3-methylsulfanyl-L-aspartate(89)-[ribosomal protein uS12]-hydrogen + (sulfur carrier)-H + 5'-deoxyadenosine + L-methionine + A + S-adenosyl-L-homocysteine + 2 H(+). Functionally, catalyzes the methylthiolation of an aspartic acid residue of ribosomal protein uS12. This Solibacter usitatus (strain Ellin6076) protein is Ribosomal protein uS12 methylthiotransferase RimO.